An 877-amino-acid chain; its full sequence is DNA polymerase I (877 aa).

Positions 180 to 270 constitute a 5'-3' exonuclease domain; that stretch reads TPAQFIDLKA…EIGLDDTLLK (91 aa). The region spanning 308-468 is the 3'-5' exonuclease domain; sequence DEIDFEIVTD…AKEKMMAELL (161 aa).

It belongs to the DNA polymerase type-A family. Single-chain monomer with multiple functions.

The catalysed reaction is DNA(n) + a 2'-deoxyribonucleoside 5'-triphosphate = DNA(n+1) + diphosphate. Functionally, in addition to polymerase activity, this DNA polymerase exhibits 3'-5' and 5'-3' exonuclease activity. The sequence is that of DNA polymerase I (polA) from Lactococcus lactis subsp. lactis (strain IL1403) (Streptococcus lactis).